A 445-amino-acid polypeptide reads, in one-letter code: Probable protein phosphatase 2C 14 (445 aa).

One can recognise a PPM-type phosphatase domain in the interval 120–440 (GFGVVSRNGK…DDITVVIIDL (321 aa)). Mn(2+) is bound by residues D156, G157, and D318. Residues 384 to 404 (NSENESPSLNREIGSSPSKSP) are disordered. Residues 390-404 (PSLNREIGSSPSKSP) show a composition bias toward polar residues. Position 431 (D431) interacts with Mn(2+).

Belongs to the PP2C family. Requires Mg(2+) as cofactor. Mn(2+) is required as a cofactor.

It carries out the reaction O-phospho-L-seryl-[protein] + H2O = L-seryl-[protein] + phosphate. It catalyses the reaction O-phospho-L-threonyl-[protein] + H2O = L-threonyl-[protein] + phosphate. This chain is Probable protein phosphatase 2C 14, found in Arabidopsis thaliana (Mouse-ear cress).